The primary structure comprises 426 residues: Serine--tRNA ligase (426 aa).

233–235 (TAE) is a binding site for L-serine. 264–266 (RRE) is an ATP binding site. Glutamate 287 is a binding site for L-serine. 351 to 354 (EISS) is a binding site for ATP. Serine 386 provides a ligand contact to L-serine.

The protein belongs to the class-II aminoacyl-tRNA synthetase family. Type-1 seryl-tRNA synthetase subfamily. In terms of assembly, homodimer. The tRNA molecule binds across the dimer.

The protein localises to the cytoplasm. The enzyme catalyses tRNA(Ser) + L-serine + ATP = L-seryl-tRNA(Ser) + AMP + diphosphate + H(+). It carries out the reaction tRNA(Sec) + L-serine + ATP = L-seryl-tRNA(Sec) + AMP + diphosphate + H(+). It functions in the pathway aminoacyl-tRNA biosynthesis; selenocysteinyl-tRNA(Sec) biosynthesis; L-seryl-tRNA(Sec) from L-serine and tRNA(Sec): step 1/1. In terms of biological role, catalyzes the attachment of serine to tRNA(Ser). Is also able to aminoacylate tRNA(Sec) with serine, to form the misacylated tRNA L-seryl-tRNA(Sec), which will be further converted into selenocysteinyl-tRNA(Sec). This is Serine--tRNA ligase from Thermosipho africanus (strain TCF52B).